The primary structure comprises 270 residues: Proteasome inhibitor PI31 subunit (270 aa).

N-acetylalanine is present on A2. Residues 2–150 are important for homodimerization and interaction with FBXO7; the sequence is AGLEVLFASA…PIHEQWEKAN (149 aa). At S152 the chain carries Phosphoserine. Residue R204 is modified to Omega-N-methylarginine. The residue at position 218 (R218) is an Asymmetric dimethylarginine. Residues 220 to 270 are disordered; sequence LIDPSSGLPNRLPPGAVPPGARFDPFGPIGTSPSGPNPDHLPPPGYDDMYL. R230 is modified (omega-N-methylarginine). Phosphoserine is present on S251. Residues 254–264 show a composition bias toward pro residues; it reads GPNPDHLPPPG.

Belongs to the proteasome inhibitor PI31 family. As to quaternary structure, monomer and homodimer. Interacts with FBXO7.

Its subcellular location is the cytoplasm. The protein localises to the endoplasmic reticulum. Functionally, plays an important role in control of proteasome function. Inhibits the hydrolysis of protein and peptide substrates by the 20S proteasome. Also inhibits the activation of the proteasome by the proteasome regulatory proteins PA700 and PA28. The polypeptide is Proteasome inhibitor PI31 subunit (PSMF1) (Bos taurus (Bovine)).